The primary structure comprises 271 residues: Indole-3-glycerol phosphate synthase (271 aa).

It belongs to the TrpC family.

The enzyme catalyses 1-(2-carboxyphenylamino)-1-deoxy-D-ribulose 5-phosphate + H(+) = (1S,2R)-1-C-(indol-3-yl)glycerol 3-phosphate + CO2 + H2O. It participates in amino-acid biosynthesis; L-tryptophan biosynthesis; L-tryptophan from chorismate: step 4/5. The sequence is that of Indole-3-glycerol phosphate synthase from Lachnoclostridium phytofermentans (strain ATCC 700394 / DSM 18823 / ISDg) (Clostridium phytofermentans).